Here is a 332-residue protein sequence, read N- to C-terminus: Biotin synthase (332 aa).

Residues 51 to 278 (RTIQLSTLMS…KSYVRLSAGR (228 aa)) form the Radical SAM core domain. Positions 66, 70, and 73 each coordinate [4Fe-4S] cluster. Residues C110, C141, C201, and R273 each coordinate [2Fe-2S] cluster.

This sequence belongs to the radical SAM superfamily. Biotin synthase family. In terms of assembly, homodimer. [4Fe-4S] cluster serves as cofactor. It depends on [2Fe-2S] cluster as a cofactor.

It catalyses the reaction (4R,5S)-dethiobiotin + (sulfur carrier)-SH + 2 reduced [2Fe-2S]-[ferredoxin] + 2 S-adenosyl-L-methionine = (sulfur carrier)-H + biotin + 2 5'-deoxyadenosine + 2 L-methionine + 2 oxidized [2Fe-2S]-[ferredoxin]. It participates in cofactor biosynthesis; biotin biosynthesis; biotin from 7,8-diaminononanoate: step 2/2. Its function is as follows. Catalyzes the conversion of dethiobiotin (DTB) to biotin by the insertion of a sulfur atom into dethiobiotin via a radical-based mechanism. The sequence is that of Biotin synthase from Haemophilus influenzae (strain PittGG).